A 35-amino-acid chain; its full sequence is Phospholipase A2 bitanarin (35 aa).

Belongs to the phospholipase A2 family. Group II subfamily. In terms of assembly, monomer. The cofactor is Ca(2+). Post-translationally, contains 14 disulfide bonds. As to expression, expressed by the venom gland.

It is found in the secreted. It carries out the reaction a 1,2-diacyl-sn-glycero-3-phosphocholine + H2O = a 1-acyl-sn-glycero-3-phosphocholine + a fatty acid + H(+). Functionally, snake venom phospholipase A2 (PLA2) that is the first competitive blocker of nicotinic acetylcholine receptors (nAChRs). Competes with alpha-bungarotoxin for binding to nAChRs and acetylcholine binding proteins (AChBPs) and blocks acetylcholine-elicited current. PLA2 catalyzes the calcium-dependent hydrolysis of the 2-acyl groups in 3-sn-phosphoglycerides. This is Phospholipase A2 bitanarin from Bitis arietans (African puff adder).